Consider the following 188-residue polypeptide: Acireductone dioxygenase (188 aa).

Fe(2+)-binding residues include His-97, His-99, Glu-103, and His-141. Ni(2+)-binding residues include His-97, His-99, Glu-103, and His-141.

This sequence belongs to the acireductone dioxygenase (ARD) family. As to quaternary structure, monomer. The cofactor is Fe(2+). Requires Ni(2+) as cofactor.

The catalysed reaction is 1,2-dihydroxy-5-(methylsulfanyl)pent-1-en-3-one + O2 = 3-(methylsulfanyl)propanoate + CO + formate + 2 H(+). The enzyme catalyses 1,2-dihydroxy-5-(methylsulfanyl)pent-1-en-3-one + O2 = 4-methylsulfanyl-2-oxobutanoate + formate + 2 H(+). Its pathway is amino-acid biosynthesis; L-methionine biosynthesis via salvage pathway; L-methionine from S-methyl-5-thio-alpha-D-ribose 1-phosphate: step 5/6. Its function is as follows. Catalyzes 2 different reactions between oxygen and the acireductone 1,2-dihydroxy-3-keto-5-methylthiopentene (DHK-MTPene) depending upon the metal bound in the active site. Fe-containing acireductone dioxygenase (Fe-ARD) produces formate and 2-keto-4-methylthiobutyrate (KMTB), the alpha-ketoacid precursor of methionine in the methionine recycle pathway. Ni-containing acireductone dioxygenase (Ni-ARD) produces methylthiopropionate, carbon monoxide and formate, and does not lie on the methionine recycle pathway. This chain is Acireductone dioxygenase, found in Xylella fastidiosa (strain 9a5c).